The following is a 443-amino-acid chain: Ribosomal protein uS12 methylthiotransferase RimO (443 aa).

An MTTase N-terminal domain is found at 10 to 120 (PRVGFVSLGC…VVKAVHQHLP (111 aa)). [4Fe-4S] cluster is bound by residues C19, C55, C84, C151, C155, and C158. The 239-residue stretch at 137 to 375 (LTPAHYAYLK…DFQEDISTQR (239 aa)) folds into the Radical SAM core domain. In terms of domain architecture, TRAM spans 377–443 (ERWIGRDITV…VHDLYARPLP (67 aa)).

Belongs to the methylthiotransferase family. RimO subfamily. Requires [4Fe-4S] cluster as cofactor.

The protein resides in the cytoplasm. The catalysed reaction is L-aspartate(89)-[ribosomal protein uS12]-hydrogen + (sulfur carrier)-SH + AH2 + 2 S-adenosyl-L-methionine = 3-methylsulfanyl-L-aspartate(89)-[ribosomal protein uS12]-hydrogen + (sulfur carrier)-H + 5'-deoxyadenosine + L-methionine + A + S-adenosyl-L-homocysteine + 2 H(+). Its function is as follows. Catalyzes the methylthiolation of an aspartic acid residue of ribosomal protein uS12. The chain is Ribosomal protein uS12 methylthiotransferase RimO from Aromatoleum aromaticum (strain DSM 19018 / LMG 30748 / EbN1) (Azoarcus sp. (strain EbN1)).